We begin with the raw amino-acid sequence, 863 residues long: Glycogen phosphorylase (863 aa).

Lys618 carries the post-translational modification N6-(pyridoxal phosphate)lysine.

This sequence belongs to the glycogen phosphorylase family. Pyridoxal 5'-phosphate is required as a cofactor.

It carries out the reaction [(1-&gt;4)-alpha-D-glucosyl](n) + phosphate = [(1-&gt;4)-alpha-D-glucosyl](n-1) + alpha-D-glucose 1-phosphate. Functionally, phosphorylase is an important allosteric enzyme in carbohydrate metabolism. Enzymes from different sources differ in their regulatory mechanisms and in their natural substrates. However, all known phosphorylases share catalytic and structural properties. The sequence is that of Glycogen phosphorylase (glgP) from Mycobacterium bovis (strain ATCC BAA-935 / AF2122/97).